Reading from the N-terminus, the 295-residue chain is Homeobox protein XHOX-7.1 (295 aa).

2 disordered regions span residues 75–115 (RKPG…PISL) and 134–175 (KPES…KPRT). The span at 84 to 97 (SSPTGSPLAGTSHS) shows a compositional bias: polar residues. Residues 141-153 (SSWIQSPSFSPSP) are compositionally biased toward low complexity. Over residues 164-174 (LRKHKTNRKPR) the composition is skewed to basic residues. Positions 170–229 (NRKPRTPFTTSQLLALERKFRQKQYLSIAERAEFSSSLNLTETQVKIWFQNRRAKAKRLQ) form a DNA-binding region, homeobox.

This sequence belongs to the Msh homeobox family.

It is found in the nucleus. The chain is Homeobox protein XHOX-7.1 from Xenopus laevis (African clawed frog).